The primary structure comprises 771 residues: Putative 8-amino-7-oxononanoate synthase 2 (771 aa).

A unknown region spans residues M1–I418. Residue R407 participates in substrate binding. Residues V419–L771 form a KAPA synthase region. Position 485–486 (G485–Y486) interacts with pyridoxal 5'-phosphate. H510 is a binding site for substrate. Residues S556 and D581–H584 each bind pyridoxal 5'-phosphate. K615 is modified (N6-(pyridoxal phosphate)lysine).

It in the C-terminal section; belongs to the class-II pyridoxal-phosphate-dependent aminotransferase family. BioF subfamily. Requires pyridoxal 5'-phosphate as cofactor.

It catalyses the reaction 6-carboxyhexanoyl-[ACP] + L-alanine + H(+) = (8S)-8-amino-7-oxononanoate + holo-[ACP] + CO2. In terms of biological role, catalyzes the decarboxylative condensation of pimeloyl-[acyl-carrier protein] and L-alanine to produce 8-amino-7-oxononanoate (AON), [acyl-carrier protein], and carbon dioxide. This is Putative 8-amino-7-oxononanoate synthase 2 (bioF2) from Mycobacterium tuberculosis (strain CDC 1551 / Oshkosh).